A 552-amino-acid chain; its full sequence is Hydroxylamine reductase (552 aa).

The [2Fe-2S] cluster site is built by Cys3, Cys6, Cys18, and Cys25. 8 residues coordinate hybrid [4Fe-2O-2S] cluster: His250, Glu274, Cys318, Cys406, Cys434, Cys459, Glu493, and Lys495. Cysteine persulfide is present on Cys406.

The protein belongs to the HCP family. It depends on [2Fe-2S] cluster as a cofactor. Requires hybrid [4Fe-2O-2S] cluster as cofactor.

It is found in the cytoplasm. The enzyme catalyses A + NH4(+) + H2O = hydroxylamine + AH2 + H(+). In terms of biological role, catalyzes the reduction of hydroxylamine to form NH(3) and H(2)O. The protein is Hydroxylamine reductase of Shewanella woodyi (strain ATCC 51908 / MS32).